The primary structure comprises 379 residues: MDPRFINTIPSLRYDDDKCDDEYAFVKALCMSGGDGANSYSANSRLQKKVLSMAKPVLVRNTEEMMMNLDFPTYIKVAELGCSSGQNSFLAIFEIINTINVLCQHVNKNSPEIDCCLNDLPENDFNTTFKFVPFFNKELMITNKSSCFVYGAPGSFYSRLFSRNSLHLIHSSYALHWLSKVPEKLENNKGNLYITSSSPQSAYKAYLNQFQKDFTMFLRLRSEEIVSNGRMVLTFIGRNTLNDPLYRDCCHFWTLLSNSLRDLVFEGLVSESKLDAFNMPFYDPNVQELKEVIQKEGSFEINELESHGFDLGHYYEEDDFEAGRNEANGIRAVSEPMLIAHFGEEIIDTLFDKYAYHVTQHANCRNKTTVSLVVSLTKK.

An S-adenosyl-L-homocysteine-binding site is contributed by Tyr-40. Salicylate is bound at residue Gln-47. Residues Cys-82, Asn-87, Asp-119, Leu-120, Ser-155, and Phe-156 each contribute to the S-adenosyl-L-homocysteine site. Residues His-176 and Trp-177 each contribute to the salicylate site. 4 residues coordinate Mg(2+): Asn-188, Asp-275, Phe-277, and Asn-278.

It belongs to the methyltransferase superfamily. Type-7 methyltransferase family. SABATH subfamily. In terms of assembly, homodimer. The cofactor is Mg(2+). Expressed in flowers and at lower levels in leaves and stems. Hardly detected in roots and siliques. Expressed in the sepals and the leaf trichomes and hydathodes.

The enzyme catalyses benzoate + S-adenosyl-L-methionine = methyl benzoate + S-adenosyl-L-homocysteine. The catalysed reaction is salicylate + S-adenosyl-L-methionine = methyl salicylate + S-adenosyl-L-homocysteine. Its function is as follows. Methyltransferase involved in the biosynthesis of methylsalicylate in response to stresses. Utilizes salicylic acid (SA) more efficiently than benzoic acid (BA). Can also use anthranilic acid and m-hydroxybenzoic acid as substrate. The polypeptide is Salicylate/benzoate carboxyl methyltransferase (BSMT1) (Arabidopsis thaliana (Mouse-ear cress)).